We begin with the raw amino-acid sequence, 160 residues long: Transcription elongation factor GreA (160 aa).

A coiled-coil region spans residues 12–76; that stretch reads EGVKKLEEEL…QLENMLKNAS (65 aa).

The protein belongs to the GreA/GreB family.

In terms of biological role, necessary for efficient RNA polymerase transcription elongation past template-encoded arresting sites. The arresting sites in DNA have the property of trapping a certain fraction of elongating RNA polymerases that pass through, resulting in locked ternary complexes. Cleavage of the nascent transcript by cleavage factors such as GreA or GreB allows the resumption of elongation from the new 3'terminus. GreA releases sequences of 2 to 3 nucleotides. The polypeptide is Transcription elongation factor GreA (Clostridium botulinum (strain Kyoto / Type A2)).